Here is an 815-residue protein sequence, read N- to C-terminus: Vacuolar proton translocating ATPase 100 kDa subunit (815 aa).

Over 1–402 (MSFLRPSIWR…NAYGIAHYRE (402 aa)) the chain is Cytoplasmic. A helical transmembrane segment spans residues 403–421 (VNPAVLTIVTFPFLFGVMF). Residues 422-423 (GD) lie on the Vacuolar side of the membrane. Residues 424–440 (VGHGALLLLSALGLISL) traverse the membrane as a helical segment. Residues 441 to 454 (EKKLAGKKLNELIQ) lie on the Cytoplasmic side of the membrane. A helical transmembrane segment spans residues 455–484 (MPFDGRYVLFLMSLFSIYVGFIYNECFSIP). The Vacuolar segment spans residues 485 to 530 (MNIFGSQYNLNSTTGLYTYQHTDRVYPVGVDPLWKGAPNELVYYNS). The chain crosses the membrane as a helical span at residues 531-550 (FKMKLSIIFGVVQMSVGICF). The Cytoplasmic portion of the chain corresponds to 551 to 571 (SLLNYLNQKGPIKIVNILTQF). A helical membrane pass occupies residues 572–592 (VPQMIFLWSIFGYMSVLIILK). The Vacuolar portion of the chain corresponds to 593-639 (WVVPYRSFEVDKVDPPFILPTIIAMFLSPGGTPDVVFFSGQGAVQTA). A helical membrane pass occupies residues 640 to 659 (LLFLALISIPVMLVIKPLFM). The Cytoplasmic segment spans residues 660-706 (KRFHFQEVERKKLGHHEEEHDDEALYTGHHGEEFEMGEVFVHQVIHT). A helical transmembrane segment spans residues 707–731 (IEFVLGAVSNTASYLRLWALSLAHS). Residues 732–749 (ELSSVFWERILIGQVERG) lie on the Vacuolar side of the membrane. The chain crosses the membrane as a helical span at residues 750–788 (NPFLAFVGFGAWLGASVAVLLLMESLSAFLHALRLHWVE). Topologically, residues 789–815 (FQNKFYIGDGVRFIPYSATRILSEDDE) are cytoplasmic.

The protein belongs to the V-ATPase 116 kDa subunit family. As to quaternary structure, the V-ATPase is a heteromultimeric enzyme.

The protein localises to the cytoplasmic vesicle membrane. It localises to the endosome membrane. It is found in the vacuole membrane. Its subcellular location is the lysosome membrane. Its function is as follows. Essential component of the vacuolar proton pump (V-ATPase), a multimeric enzyme that catalyzes the translocation of protons across the membranes. Required for assembly and activity of the V-ATPase. Required in both the contractile vacuole system and the endosomal/lysosomal system. Also required for cytosolic pH regulation. The chain is Vacuolar proton translocating ATPase 100 kDa subunit (vatM) from Dictyostelium discoideum (Social amoeba).